The sequence spans 91 residues: uncharacterized protein (91 aa).

The signal sequence occupies residues 1 to 18 (MKVNLILFSLFLLVSIMA). The N-palmitoyl cysteine moiety is linked to residue Cys-19. A lipid anchor (S-diacylglycerol cysteine) is attached at Cys-19.

The protein localises to the cell membrane. This is an uncharacterized protein from Escherichia coli (strain K12).